A 185-amino-acid polypeptide reads, in one-letter code: Calcium-binding protein K-like (185 aa).

EF-hand domains lie at Trp-60–Ala-95 and Pro-96–Cys-131. Ca(2+) is bound by residues Asp-73, Asp-75, Asn-77, Glu-84, Asp-109, Asp-111, Ser-113, Tyr-115, and Glu-120.

Belongs to the recoverin family.

The polypeptide is Calcium-binding protein K-like (Dictyostelium discoideum (Social amoeba)).